A 647-amino-acid polypeptide reads, in one-letter code: DNA mismatch repair protein MutL (647 aa).

A disordered region spans residues 389 to 423 (SESSVSSVANKQQPTVKQAKRSADDSDSEHGKLDY). Positions 409-423 (RSADDSDSEHGKLDY) are enriched in basic and acidic residues.

It belongs to the DNA mismatch repair MutL/HexB family.

Its function is as follows. This protein is involved in the repair of mismatches in DNA. It is required for dam-dependent methyl-directed DNA mismatch repair. May act as a 'molecular matchmaker', a protein that promotes the formation of a stable complex between two or more DNA-binding proteins in an ATP-dependent manner without itself being part of a final effector complex. The polypeptide is DNA mismatch repair protein MutL (Streptococcus thermophilus (strain ATCC BAA-491 / LMD-9)).